The chain runs to 408 residues: UPF0761 membrane protein NMCC_0461 (408 aa).

The next 6 membrane-spanning stretches (helical) occupy residues 43-63 (LLALVPVLTVMVAVASIFPVF), 100-120 (LTAIGSVMLVVTSLMLIRTID), 139-159 (FLVYWALLTFGPLSLGVGISF), 176-196 (WSGALRTAATLTFMTLLLWGL), 210-230 (AFVGALATAFCLETARSLFTW), and 248-268 (VPFFLLWLNLLWTLVLGGAVL).

The protein belongs to the UPF0761 family.

It is found in the cell inner membrane. The sequence is that of UPF0761 membrane protein NMCC_0461 from Neisseria meningitidis serogroup C (strain 053442).